The following is a 311-amino-acid chain: Methionyl-tRNA formyltransferase (311 aa).

110–113 serves as a coordination point for (6S)-5,6,7,8-tetrahydrofolate; that stretch reads SLLP.

This sequence belongs to the Fmt family.

It carries out the reaction L-methionyl-tRNA(fMet) + (6R)-10-formyltetrahydrofolate = N-formyl-L-methionyl-tRNA(fMet) + (6S)-5,6,7,8-tetrahydrofolate + H(+). Its function is as follows. Attaches a formyl group to the free amino group of methionyl-tRNA(fMet). The formyl group appears to play a dual role in the initiator identity of N-formylmethionyl-tRNA by promoting its recognition by IF2 and preventing the misappropriation of this tRNA by the elongation apparatus. The protein is Methionyl-tRNA formyltransferase of Streptococcus pyogenes serotype M12 (strain MGAS2096).